We begin with the raw amino-acid sequence, 450 residues long: Phosphoglucosamine mutase (450 aa).

Serine 103 functions as the Phosphoserine intermediate in the catalytic mechanism. The Mg(2+) site is built by serine 103, aspartate 243, aspartate 245, and aspartate 247. Residue serine 103 is modified to Phosphoserine.

This sequence belongs to the phosphohexose mutase family. The cofactor is Mg(2+). Post-translationally, activated by phosphorylation.

The catalysed reaction is alpha-D-glucosamine 1-phosphate = D-glucosamine 6-phosphate. Catalyzes the conversion of glucosamine-6-phosphate to glucosamine-1-phosphate. This Latilactobacillus sakei subsp. sakei (strain 23K) (Lactobacillus sakei subsp. sakei) protein is Phosphoglucosamine mutase.